The following is a 330-amino-acid chain: MDAAFVIATIIKILIVLGLFSALAGFGTYVERKVLAFMQRRLGPMHVGPYGLLQVLADGIKLFTKEDFIPQGAVRPVFMIAPVITAATAFIAMAAIPMFPEFTIGGYTVKPIISDINVGLLFVLGVMAAGLYGPLLAGMSSGNKWALLGAARTAIQFLSYEVVTGLSVLAPVMIVGSISLVDFNNYQAGGMGNWLIWKQPLAFVLFLIAGYAETNRTPFDLLEHEAEVISGYATEYSGMRWGMFFIGEYANMFTIGFLVSLIFLGGFNDWGFIPGAIAILIKVFFFFFLFLWTRASWPHVRPDQLMWLCWKVLMPLAVINVVITGIVMSI.

Helical transmembrane passes span 3–23 (AAFV…FSAL), 76–96 (PVFM…MAAI), 118–138 (VGLL…LLAG), 161–181 (EVVT…ISLV), 188–208 (AGGM…LFLI), 244–264 (FFIG…LIFL), 272–292 (FIPG…LFLW), and 307–327 (WLCW…TGIV).

Belongs to the complex I subunit 1 family. As to quaternary structure, NDH-1 is composed of 14 different subunits. Subunits NuoA, H, J, K, L, M, N constitute the membrane sector of the complex.

It localises to the cell inner membrane. The enzyme catalyses a quinone + NADH + 5 H(+)(in) = a quinol + NAD(+) + 4 H(+)(out). Functionally, NDH-1 shuttles electrons from NADH, via FMN and iron-sulfur (Fe-S) centers, to quinones in the respiratory chain. The immediate electron acceptor for the enzyme in this species is believed to be ubiquinone. Couples the redox reaction to proton translocation (for every two electrons transferred, four hydrogen ions are translocated across the cytoplasmic membrane), and thus conserves the redox energy in a proton gradient. This subunit may bind ubiquinone. This Nitratiruptor sp. (strain SB155-2) protein is NADH-quinone oxidoreductase subunit H.